The primary structure comprises 161 residues: MPHSYGYRARTRALFARAFKTNGPVHLSTYLTNFKIGEYVDVVGNAAVHKGMPFKYYHGRTGIVWNVTKRAIGVEINKRVRHRIIKKRIHVRIDHVKKSSCRDSFLKRVKENDKIKHDAHVAKLPVPSTKRLPVLPKAGAIIKSKGQVPETCHAIPYEHLV.

The protein belongs to the eukaryotic ribosomal protein eL21 family.

The chain is Large ribosomal subunit protein eL21 (RPL21) from Cyanophora paradoxa.